The sequence spans 224 residues: Probable 2-phosphosulfolactate phosphatase (224 aa).

It belongs to the ComB family. Mg(2+) serves as cofactor.

The enzyme catalyses (2R)-O-phospho-3-sulfolactate + H2O = (2R)-3-sulfolactate + phosphate. The chain is Probable 2-phosphosulfolactate phosphatase from Pseudothermotoga lettingae (strain ATCC BAA-301 / DSM 14385 / NBRC 107922 / TMO) (Thermotoga lettingae).